Here is a 71-residue protein sequence, read N- to C-terminus: Large ribosomal subunit protein bL32c (71 aa).

A disordered region spans residues 1–24 (MAVPKKRTSRSKKKIRKNVRKGKK).

Belongs to the bacterial ribosomal protein bL32 family.

It is found in the plastid. The protein resides in the chloroplast. The chain is Large ribosomal subunit protein bL32c from Pinus koraiensis (Korean pine).